The primary structure comprises 288 residues: Polyamine aminopropyltransferase (288 aa).

A PABS domain is found at 9–238 (ETLHDQFGQY…GIMTFAWATD (230 aa)). Gln33 is a binding site for S-methyl-5'-thioadenosine. Spermidine contacts are provided by His64 and Asp88. Residues Glu108 and 140–141 (DG) each bind S-methyl-5'-thioadenosine. Asp158 serves as the catalytic Proton acceptor. Residue 158–161 (DCTD) participates in spermidine binding. Pro165 is an S-methyl-5'-thioadenosine binding site.

This sequence belongs to the spermidine/spermine synthase family. Homodimer or homotetramer.

Its subcellular location is the cytoplasm. It carries out the reaction S-adenosyl 3-(methylsulfanyl)propylamine + putrescine = S-methyl-5'-thioadenosine + spermidine + H(+). It participates in amine and polyamine biosynthesis; spermidine biosynthesis; spermidine from putrescine: step 1/1. In terms of biological role, catalyzes the irreversible transfer of a propylamine group from the amino donor S-adenosylmethioninamine (decarboxy-AdoMet) to putrescine (1,4-diaminobutane) to yield spermidine. The protein is Polyamine aminopropyltransferase of Shigella flexneri serotype 5b (strain 8401).